The sequence spans 414 residues: Peptidoglycan beta-N-acetylmuramidase NamZ (414 aa).

The N-terminal stretch at 1-23 (MRKTIFAFLTGLMMFGTITAASA) is a signal peptide.

Belongs to the glycoside hydrolase 171 family. As to quaternary structure, homodimer in solution.

The protein resides in the secreted. It carries out the reaction Hydrolysis of terminal, non-reducing N-acetylmuramic residues.. In terms of biological role, catalyzes the exo-lytic cleavage of beta-1,4-N-acetylmuramate (beta-1,4-MurNAc) from the non-reducing ends of peptidoglycan chains. Specifically hydrolyzes the natural, peptidoglycan-derived disaccharide MurNAc-GlcNAc and the artificial substrate para-nitrophenyl beta-N-acetylmuramic acid (pNP-MurNAc). Requires a MurNAc entity at the non-reducing end, and cannot cleave GlcNAc-MurNAc. Probably plays a role in cell wall turnover and recycling. This is Peptidoglycan beta-N-acetylmuramidase NamZ from Bacillus subtilis (strain 168).